The chain runs to 304 residues: D-tagatose-1-phosphate kinase (304 aa).

Residue aspartate 250 is the Proton acceptor of the active site.

Belongs to the carbohydrate kinase PfkB family. Mg(2+) serves as cofactor.

The enzyme catalyses alpha-D-tagatopyranose 1-phosphate + ATP = D-tagatofuranose 1,6-bisphosphate + ADP + H(+). It functions in the pathway carbohydrate degradation. Its activity is regulated as follows. Activity is inhibited by tagatose-6-phosphate and fructose-6-phosphate. Functionally, kinase involved in a D-tagatose catabolic pathway. Catalyzes the phosphorylation of D-tagatose-1-phosphate (Tag-1P) to D-tagatose-1,6-bisphosphate. Can also use D-fructose-1-phosphate, with 40-fold lower catalytic efficiency, but not tagatose-6-phosphate or fructose-6-phosphate. The substrate, which occurs in a pyranose form in solution, may undergo a change to the furanose conformation after binding to the enzyme, in order to permit phosphorylation at C-6. This is D-tagatose-1-phosphate kinase from Bacillus licheniformis (strain ATCC 14580 / DSM 13 / JCM 2505 / CCUG 7422 / NBRC 12200 / NCIMB 9375 / NCTC 10341 / NRRL NRS-1264 / Gibson 46).